The primary structure comprises 174 residues: Mating-type protein ALPHA2 (174 aa).

The segment at residues 108–170 (QPYRGHRFTK…NRRRKQKHPP (63 aa)) is a DNA-binding region (homeobox; TALE-type).

The protein belongs to the TALE/M-ATYP homeobox family. Forms a heterodimer with A1.

The protein resides in the nucleus. In terms of biological role, mating type proteins are sequence specific DNA-binding proteins that act as master switches in yeast differentiation by controlling gene expression in a cell type-specific fashion. Transcriptional corepressor that acts in conjunction with A1 to repress transcription of haploid-specific genes and of MATALPHA1. The polypeptide is Mating-type protein ALPHA2 (MATALPHA2) (Nakaseomyces delphensis (Yeast)).